The chain runs to 369 residues: MSIDFQQLPHAGIRSLIPYVPGKSIEELAKEKGITDIIKLASNENPLGCSPLALSAIQTMSSHYIATYPSPWNHPLMSKLASYLKVKPEQLFLSNGSDYLFNILLNCFALHTDRHILTHDYAFSTYAIQANSLQIPINSVPIGHNWEVNITDIVNACNQKTGIIFIANPNNPTGVLIQQEEIKYLLEQIPKSTLLVLDEAYYEFAASQLTVNSLDWLEEHPNLVVTRTFSKIYGMAGLRLGYAIANPSIINILKRVQLPFIVNQVALAAAYAAIDDDDFIQSSLKMNNEGMSQLQAGFNELNIKYLPSSCNFLTFDCEEDSMALYNYLLDNGIIVRPLHAYKMNNFIRVTIGTKEQNSRFLTALKNFYL.

Residue K231 is modified to N6-(pyridoxal phosphate)lysine.

The protein belongs to the class-II pyridoxal-phosphate-dependent aminotransferase family. Histidinol-phosphate aminotransferase subfamily. Homodimer. Pyridoxal 5'-phosphate serves as cofactor.

It carries out the reaction L-histidinol phosphate + 2-oxoglutarate = 3-(imidazol-4-yl)-2-oxopropyl phosphate + L-glutamate. Its pathway is amino-acid biosynthesis; L-histidine biosynthesis; L-histidine from 5-phospho-alpha-D-ribose 1-diphosphate: step 7/9. The polypeptide is Histidinol-phosphate aminotransferase 2 (Legionella pneumophila (strain Lens)).